The primary structure comprises 202 residues: Large ribosomal subunit protein uL18 (202 aa).

The protein belongs to the universal ribosomal protein uL18 family. Part of the 50S ribosomal subunit. Contacts the 5S and 23S rRNAs.

Functionally, this is one of the proteins that bind and probably mediate the attachment of the 5S RNA into the large ribosomal subunit, where it forms part of the central protuberance. The chain is Large ribosomal subunit protein uL18 from Staphylothermus marinus (strain ATCC 43588 / DSM 3639 / JCM 9404 / F1).